The primary structure comprises 351 residues: Lipoyl synthase (351 aa).

Residues 1–10 show a composition bias toward polar residues; that stretch reads MNDSGNSSKV. The segment at 1–27 is disordered; that stretch reads MNDSGNSSKVNVRPPSAGLGAPSPGKR. Positions 14-24 are enriched in low complexity; it reads PPSAGLGAPSP. The [4Fe-4S] cluster site is built by Cys-74, Cys-79, Cys-85, Cys-100, Cys-104, Cys-107, and Ser-311. The region spanning 86 to 300 is the Radical SAM core domain; sequence WEDREATFLI…KEQAKEIGFS (215 aa).

This sequence belongs to the radical SAM superfamily. Lipoyl synthase family. [4Fe-4S] cluster serves as cofactor.

Its subcellular location is the cytoplasm. The catalysed reaction is [[Fe-S] cluster scaffold protein carrying a second [4Fe-4S](2+) cluster] + N(6)-octanoyl-L-lysyl-[protein] + 2 oxidized [2Fe-2S]-[ferredoxin] + 2 S-adenosyl-L-methionine + 4 H(+) = [[Fe-S] cluster scaffold protein] + N(6)-[(R)-dihydrolipoyl]-L-lysyl-[protein] + 4 Fe(3+) + 2 hydrogen sulfide + 2 5'-deoxyadenosine + 2 L-methionine + 2 reduced [2Fe-2S]-[ferredoxin]. The protein operates within protein modification; protein lipoylation via endogenous pathway; protein N(6)-(lipoyl)lysine from octanoyl-[acyl-carrier-protein]: step 2/2. In terms of biological role, catalyzes the radical-mediated insertion of two sulfur atoms into the C-6 and C-8 positions of the octanoyl moiety bound to the lipoyl domains of lipoate-dependent enzymes, thereby converting the octanoylated domains into lipoylated derivatives. The chain is Lipoyl synthase from Tropheryma whipplei (strain TW08/27) (Whipple's bacillus).